The chain runs to 158 residues: NADPH-dependent 7-cyano-7-deazaguanine reductase (158 aa).

Residues 1–13 (MAKRSNTTMTSAG) are compositionally biased toward polar residues. Residues 1 to 37 (MAKRSNTTMTSAGLQLGREVAPPDSPETAKLDRVPNP) are disordered. Residues 27 to 37 (ETAKLDRVPNP) show a composition bias toward basic and acidic residues. Cys-56 functions as the Thioimide intermediate in the catalytic mechanism. The Proton donor role is filled by Asp-63. Residues 78–80 (VES) and 97–98 (HE) contribute to the substrate site.

The protein belongs to the GTP cyclohydrolase I family. QueF type 1 subfamily.

It localises to the cytoplasm. It carries out the reaction 7-aminomethyl-7-carbaguanine + 2 NADP(+) = 7-cyano-7-deazaguanine + 2 NADPH + 3 H(+). It participates in tRNA modification; tRNA-queuosine biosynthesis. Its function is as follows. Catalyzes the NADPH-dependent reduction of 7-cyano-7-deazaguanine (preQ0) to 7-aminomethyl-7-deazaguanine (preQ1). The sequence is that of NADPH-dependent 7-cyano-7-deazaguanine reductase from Bradyrhizobium sp. (strain ORS 278).